We begin with the raw amino-acid sequence, 217 residues long: Probable transaldolase (217 aa).

The active-site Schiff-base intermediate with substrate is Lys83.

The protein belongs to the transaldolase family. Type 3B subfamily.

Its subcellular location is the cytoplasm. It carries out the reaction D-sedoheptulose 7-phosphate + D-glyceraldehyde 3-phosphate = D-erythrose 4-phosphate + beta-D-fructose 6-phosphate. It participates in carbohydrate degradation; pentose phosphate pathway; D-glyceraldehyde 3-phosphate and beta-D-fructose 6-phosphate from D-ribose 5-phosphate and D-xylulose 5-phosphate (non-oxidative stage): step 2/3. In terms of biological role, transaldolase is important for the balance of metabolites in the pentose-phosphate pathway. The sequence is that of Probable transaldolase from Hydrogenobaculum sp. (strain Y04AAS1).